Consider the following 418-residue polypeptide: Mitochondrial distribution and morphology protein 10 (418 aa).

This sequence belongs to the MDM10 family. As to quaternary structure, component of the ER-mitochondria encounter structure (ERMES) or MDM complex, composed of MMM1, MDM10, MDM12 and MDM34. Associates with the mitochondrial outer membrane sorting assembly machinery SAM(core) complex.

It is found in the mitochondrion outer membrane. Functionally, component of the ERMES/MDM complex, which serves as a molecular tether to connect the endoplasmic reticulum and mitochondria. Components of this complex are involved in the control of mitochondrial shape and protein biogenesis and may function in phospholipid exchange. MDM10 is involved in the late assembly steps of the general translocase of the mitochondrial outer membrane (TOM complex). Functions in the TOM40-specific route of the assembly of outer membrane beta-barrel proteins, including the association of TOM40 with the receptor TOM22 and small TOM proteins. Can associate with the SAM(core) complex as well as the MDM12-MMM1 complex, both involved in late steps of the major beta-barrel assembly pathway, that is responsible for biogenesis of all outer membrane beta-barrel proteins. May act as a switch that shuttles between both complexes and channels precursor proteins into the TOM40-specific pathway. Plays a role in mitochondrial morphology and in the inheritance of mitochondria. This is Mitochondrial distribution and morphology protein 10 from Meyerozyma guilliermondii (strain ATCC 6260 / CBS 566 / DSM 6381 / JCM 1539 / NBRC 10279 / NRRL Y-324) (Yeast).